Here is a 347-residue protein sequence, read N- to C-terminus: Guanine nucleotide-binding protein subunit beta (347 aa).

WD repeat units lie at residues 60 to 90 (GHLAKIYAMHWAEDNVHLVSASQDGKLLVWD), 102 to 132 (LRSSWVMTCAYSPTANFVACGGLDNICSIYN), 148 to 177 (SHTGYLSCCRFLNDRQIVTSSGDMTCILWD), 189 to 219 (DHNGDVMSVSVSPDKNYFISGACDATAKLWD), 231 to 261 (GHEADINAVQYFPNGLSFGTGSDDASCRLFD), 275 to 305 (NILCGITSVGFSFSGRFLFAGYDDFTCNVWD), and 317 to 347 (GHGNRVSCLGVPTDGMALCTGSWDSLLKIWA).

It belongs to the WD repeat G protein beta family. In terms of assembly, g proteins are composed of 3 units, alpha, beta and gamma. Interacts with gpgA, and this requires phlp1.

The protein resides in the cytoplasm. Its subcellular location is the cell membrane. In terms of biological role, guanine nucleotide-binding proteins (G proteins) are involved as a modulator or transducer in various transmembrane signaling systems. The beta and gamma chains are required for the GTPase activity, for replacement of GDP by GTP, and for G protein-effector interaction. Required for normal chemotaxis in response to cAMP and for aggregation during scorocarp development. In Dictyostelium discoideum (Social amoeba), this protein is Guanine nucleotide-binding protein subunit beta (gpbA).